The sequence spans 72 residues: Translation initiation factor IF-1 (72 aa).

The S1-like domain occupies 1-72; that stretch reads MAKADVIEVE…TKGRITFRFK (72 aa).

It belongs to the IF-1 family. Component of the 30S ribosomal translation pre-initiation complex which assembles on the 30S ribosome in the order IF-2 and IF-3, IF-1 and N-formylmethionyl-tRNA(fMet); mRNA recruitment can occur at any time during PIC assembly.

It is found in the cytoplasm. One of the essential components for the initiation of protein synthesis. Stabilizes the binding of IF-2 and IF-3 on the 30S subunit to which N-formylmethionyl-tRNA(fMet) subsequently binds. Helps modulate mRNA selection, yielding the 30S pre-initiation complex (PIC). Upon addition of the 50S ribosomal subunit IF-1, IF-2 and IF-3 are released leaving the mature 70S translation initiation complex. The polypeptide is Translation initiation factor IF-1 (Limosilactobacillus reuteri (strain DSM 20016) (Lactobacillus reuteri)).